Consider the following 118-residue polypeptide: D-dopachrome decarboxylase (118 aa).

Position 2 is an N-acetylproline (Pro-2). Lys-33 bears the N6-acetyllysine mark.

This sequence belongs to the MIF family. Homotrimer.

It is found in the cytoplasm. It carries out the reaction D-dopachrome + H(+) = 5,6-dihydroxyindole + CO2. Functionally, tautomerization of D-dopachrome with decarboxylation to give 5,6-dihydroxyindole (DHI). The chain is D-dopachrome decarboxylase (DDT) from Bos taurus (Bovine).